Here is a 355-residue protein sequence, read N- to C-terminus: MFEKIEELEVRYHELESLLADPAVLGNQPEFRRLSREHNDLTPLIESYRTYKKVLEEMEGNRELLADPEMKEMAQAELEELEQRQEELEGEIKLLLLPRDPNDDRNVILEIRAGTGGDESALFAGDLFRMYSRFAERNRWKVEVMSASESERGGFKEIVALIEGQGVFAKLKYESGTHRVQRVPETEAQGRIHTSACTVAVLPEAEDIEVDINPADLKIDVYRASGAGGQHVNKTESAVRITHIPTGIVVECQDERSQIKNRAKAMKVLKTKILDGLHQEQNARIAADRKQQVGSGDRSERIRTYNFPQGRMTDHRIGLTLYRLDSLMEGDIAEVVDALRTHYQMEALKAQAEAA.

Position 230 is an N5-methylglutamine (glutamine 230).

The protein belongs to the prokaryotic/mitochondrial release factor family. In terms of processing, methylated by PrmC. Methylation increases the termination efficiency of RF1.

The protein localises to the cytoplasm. Its function is as follows. Peptide chain release factor 1 directs the termination of translation in response to the peptide chain termination codons UAG and UAA. This chain is Peptide chain release factor 1, found in Geobacter sulfurreducens (strain ATCC 51573 / DSM 12127 / PCA).